Here is a 466-residue protein sequence, read N- to C-terminus: Light-independent protochlorophyllide reductase subunit N (466 aa).

The [4Fe-4S] cluster site is built by C24, C49, and C109.

This sequence belongs to the BchN/ChlN family. As to quaternary structure, protochlorophyllide reductase is composed of three subunits; ChlL, ChlN and ChlB. Forms a heterotetramer of two ChlB and two ChlN subunits. [4Fe-4S] cluster serves as cofactor.

It catalyses the reaction chlorophyllide a + oxidized 2[4Fe-4S]-[ferredoxin] + 2 ADP + 2 phosphate = protochlorophyllide a + reduced 2[4Fe-4S]-[ferredoxin] + 2 ATP + 2 H2O. It participates in porphyrin-containing compound metabolism; chlorophyll biosynthesis (light-independent). In terms of biological role, component of the dark-operative protochlorophyllide reductase (DPOR) that uses Mg-ATP and reduced ferredoxin to reduce ring D of protochlorophyllide (Pchlide) to form chlorophyllide a (Chlide). This reaction is light-independent. The NB-protein (ChlN-ChlB) is the catalytic component of the complex. The sequence is that of Light-independent protochlorophyllide reductase subunit N from Synechococcus sp. (strain JA-3-3Ab) (Cyanobacteria bacterium Yellowstone A-Prime).